The chain runs to 427 residues: Acetylornithine aminotransferase, mitochondrial (427 aa).

Position 279 is an N6-(pyridoxal phosphate)lysine (lysine 279).

This sequence belongs to the class-III pyridoxal-phosphate-dependent aminotransferase family. The cofactor is pyridoxal 5'-phosphate.

It is found in the mitochondrion matrix. The catalysed reaction is N(2)-acetyl-L-ornithine + 2-oxoglutarate = N-acetyl-L-glutamate 5-semialdehyde + L-glutamate. It functions in the pathway amino-acid biosynthesis; L-arginine biosynthesis; N(2)-acetyl-L-ornithine from L-glutamate: step 4/4. The sequence is that of Acetylornithine aminotransferase, mitochondrial (ARG8) from Candida glabrata (strain ATCC 2001 / BCRC 20586 / JCM 3761 / NBRC 0622 / NRRL Y-65 / CBS 138) (Yeast).